Consider the following 456-residue polypeptide: Glycine receptor subunit alpha-4 (456 aa).

Positions 1–27 (MTTLVPASLFLLLWTLPGKVLLSVALA) are cleaved as a signal peptide. Topologically, residues 28 to 256 (KEDVKSGLKG…KFHLERQMGY (229 aa)) are extracellular. A glycan (N-linked (GlcNAc...) asparagine) is linked at Asn-71. 2 disulfides stabilise this stretch: Cys-171–Cys-185 and Cys-232–Cys-243. A strychnine-binding site is contributed by 236-241 (YNTGKF). The chain crosses the membrane as a helical span at residues 257–278 (YLIQMYIPSLLIVILSWVSFWI). At 279–283 (NMDAA) the chain is on the cytoplasmic side. Residues 284-304 (PARVGLGITTVLTMTTQSSGS) traverse the membrane as a helical segment. Topologically, residues 305–315 (RASLPKVSYVK) are extracellular. Residues 316–336 (AIDIWMAVCLLFVFAALLEYA) form a helical membrane-spanning segment. Topologically, residues 337–423 (AVNFVSRQHK…YVDRAKRIDT (87 aa)) are cytoplasmic. The helical transmembrane segment at 424-444 (ISRAVFPFTFLVFNIFYWVVY) threads the bilayer. Topologically, residues 445-456 (KVLRSEDIHQAL) are extracellular.

The protein belongs to the ligand-gated ion channel (TC 1.A.9) family. Glycine receptor (TC 1.A.9.3) subfamily. GLRA4 sub-subfamily. As to quaternary structure, homopentamer (in vitro). Heteropentamer composed of GLRA4 and GLRB. In terms of tissue distribution, detected in the retina inner plexiform layer, especially at the border between layer three and four (at protein level).

The protein localises to the postsynaptic cell membrane. It is found in the synapse. It localises to the perikaryon. The protein resides in the cell projection. Its subcellular location is the dendrite. The protein localises to the cell membrane. The catalysed reaction is chloride(in) = chloride(out). Inhibited by strychnine. Functionally, glycine receptors are ligand-gated chloride channels. Channel opening is triggered by extracellular glycine. Channel opening is also triggered by taurine and beta-alanine. Plays a role in the down-regulation of neuronal excitability. Contributes to the generation of inhibitory postsynaptic currents. The protein is Glycine receptor subunit alpha-4 (Glra4) of Mus musculus (Mouse).